We begin with the raw amino-acid sequence, 277 residues long: C2H2-type zinc-finger transcription factor (277 aa).

Disordered stretches follow at residues 23-66 (PTMN…AHPP) and 78-146 (MNEP…TDSI). Over residues 27–37 (EIETTDNTYPR) the composition is skewed to polar residues. The C2H2-type; degenerate zinc finger occupies 185–208 (HPCPDCGRVFTRSTARNFHRQSGT).

This sequence belongs to the GLI C2H2-type zinc-finger protein family.

The protein resides in the nucleus. Functionally, C2H2-type zinc-finger transcription factor that controls the expression of the nonribosomal peptide synthases inpA and inpB, as well as of the other inp cluster-associated genes. Also mediates the expression of the asperfuranone biosynthesis gene cluster by binding to the afoA promoter. Probably recognizes the 5'-CT/C/AAAAGGAT/AT/GG/CA-3' motif in the promoters of teget genes. The protein is C2H2-type zinc-finger transcription factor of Emericella nidulans (strain FGSC A4 / ATCC 38163 / CBS 112.46 / NRRL 194 / M139) (Aspergillus nidulans).